Reading from the N-terminus, the 64-residue chain is Large ribosomal subunit protein uL30 (64 aa).

The segment at 1–22 is disordered; that stretch reads MAKAAKTIKVEQTRSAIRRQHS.

This sequence belongs to the universal ribosomal protein uL30 family. In terms of assembly, part of the 50S ribosomal subunit.

The protein is Large ribosomal subunit protein uL30 of Nitrobacter hamburgensis (strain DSM 10229 / NCIMB 13809 / X14).